Reading from the N-terminus, the 345-residue chain is Hydroxymethylglutaryl-CoA synthase (345 aa).

D28 provides a ligand contact to (3S)-3-hydroxy-3-methylglutaryl-CoA. The active-site Proton donor/acceptor is the E80. (3S)-3-hydroxy-3-methylglutaryl-CoA-binding residues include C112 and T153. C112 functions as the Acyl-thioester intermediate in the catalytic mechanism. R199 serves as a coordination point for CoA. The (3S)-3-hydroxy-3-methylglutaryl-CoA site is built by T201 and H234. Residue H234 is the Proton donor/acceptor of the active site. K239 contributes to the CoA binding site. R243, N266, and S296 together coordinate (3S)-3-hydroxy-3-methylglutaryl-CoA.

Belongs to the thiolase-like superfamily. Archaeal HMG-CoA synthase family. In terms of assembly, interacts with acetoacetyl-CoA thiolase that catalyzes the precedent step in the pathway and with a DUF35 protein. The acetoacetyl-CoA thiolase/HMG-CoA synthase complex channels the intermediate via a fused CoA-binding site, which allows for efficient coupling of the endergonic thiolase reaction with the exergonic HMGCS reaction.

It carries out the reaction acetoacetyl-CoA + acetyl-CoA + H2O = (3S)-3-hydroxy-3-methylglutaryl-CoA + CoA + H(+). Its pathway is metabolic intermediate biosynthesis; (R)-mevalonate biosynthesis; (R)-mevalonate from acetyl-CoA: step 2/3. Functionally, catalyzes the condensation of acetyl-CoA with acetoacetyl-CoA to form 3-hydroxy-3-methylglutaryl-CoA (HMG-CoA). Functions in the mevalonate (MVA) pathway leading to isopentenyl diphosphate (IPP), a key precursor for the biosynthesis of isoprenoid compounds that are building blocks of archaeal membrane lipids. This Methanobrevibacter smithii (strain ATCC 35061 / DSM 861 / OCM 144 / PS) protein is Hydroxymethylglutaryl-CoA synthase.